A 463-amino-acid polypeptide reads, in one-letter code: Bifunctional protein HldE (463 aa).

The tract at residues 1 to 315 is ribokinase; the sequence is MRKILVIGDL…LILNQTHPKI (315 aa). 191 to 194 contributes to the ATP binding site; that stretch reads NRFE. The active site involves Asp260. Positions 334–463 are cytidylyltransferase; the sequence is FTNGCFDILH…IEKIKRAYND (130 aa).

It in the N-terminal section; belongs to the carbohydrate kinase PfkB family. In the C-terminal section; belongs to the cytidylyltransferase family. Homodimer.

The catalysed reaction is D-glycero-beta-D-manno-heptose 7-phosphate + ATP = D-glycero-beta-D-manno-heptose 1,7-bisphosphate + ADP + H(+). The enzyme catalyses D-glycero-beta-D-manno-heptose 1-phosphate + ATP + H(+) = ADP-D-glycero-beta-D-manno-heptose + diphosphate. The protein operates within nucleotide-sugar biosynthesis; ADP-L-glycero-beta-D-manno-heptose biosynthesis; ADP-L-glycero-beta-D-manno-heptose from D-glycero-beta-D-manno-heptose 7-phosphate: step 1/4. It participates in nucleotide-sugar biosynthesis; ADP-L-glycero-beta-D-manno-heptose biosynthesis; ADP-L-glycero-beta-D-manno-heptose from D-glycero-beta-D-manno-heptose 7-phosphate: step 3/4. Its function is as follows. Catalyzes the phosphorylation of D-glycero-D-manno-heptose 7-phosphate at the C-1 position to selectively form D-glycero-beta-D-manno-heptose-1,7-bisphosphate. Catalyzes the ADP transfer from ATP to D-glycero-beta-D-manno-heptose 1-phosphate, yielding ADP-D-glycero-beta-D-manno-heptose. The sequence is that of Bifunctional protein HldE from Helicobacter acinonychis (strain Sheeba).